A 479-amino-acid chain; its full sequence is Bifunctional protein HldE (479 aa).

The segment at methionine 1–lysine 319 is ribokinase. Asparagine 195–glutamate 198 serves as a coordination point for ATP. The active site involves aspartate 264. A cytidylyltransferase region spans residues methionine 346 to asparagine 479.

The protein in the N-terminal section; belongs to the carbohydrate kinase PfkB family. This sequence in the C-terminal section; belongs to the cytidylyltransferase family. Homodimer.

The enzyme catalyses D-glycero-beta-D-manno-heptose 7-phosphate + ATP = D-glycero-beta-D-manno-heptose 1,7-bisphosphate + ADP + H(+). It catalyses the reaction D-glycero-beta-D-manno-heptose 1-phosphate + ATP + H(+) = ADP-D-glycero-beta-D-manno-heptose + diphosphate. Its pathway is nucleotide-sugar biosynthesis; ADP-L-glycero-beta-D-manno-heptose biosynthesis; ADP-L-glycero-beta-D-manno-heptose from D-glycero-beta-D-manno-heptose 7-phosphate: step 1/4. The protein operates within nucleotide-sugar biosynthesis; ADP-L-glycero-beta-D-manno-heptose biosynthesis; ADP-L-glycero-beta-D-manno-heptose from D-glycero-beta-D-manno-heptose 7-phosphate: step 3/4. In terms of biological role, catalyzes the phosphorylation of D-glycero-D-manno-heptose 7-phosphate at the C-1 position to selectively form D-glycero-beta-D-manno-heptose-1,7-bisphosphate. Its function is as follows. Catalyzes the ADP transfer from ATP to D-glycero-beta-D-manno-heptose 1-phosphate, yielding ADP-D-glycero-beta-D-manno-heptose. In Blochmanniella floridana, this protein is Bifunctional protein HldE.